Consider the following 701-residue polypeptide: UvrABC system protein B (701 aa).

Residues 35–422 (RRIQGGAADT…GGDVVEQVIR (388 aa)) form the Helicase ATP-binding domain. Position 48-55 (48-55 (GATGTGKT)) interacts with ATP. The short motif at 101–124 (YYDYYQPEAYVPQTDTYIEKDSSI) is the Beta-hairpin element. Residues 439–605 (QIDDLVHEIR…PLRKKIADIL (167 aa)) form the Helicase C-terminal domain. Residues 620–648 (ARSRGEKRGTPTPRSGALSGPDRVAEQAK) form a disordered region. Residues 656 to 691 (AALVEQLTEQMHQAAADLQFELAARLRDEIKELKRE) enclose the UVR domain.

This sequence belongs to the UvrB family. In terms of assembly, forms a heterotetramer with UvrA during the search for lesions. Interacts with UvrC in an incision complex.

It is found in the cytoplasm. Functionally, the UvrABC repair system catalyzes the recognition and processing of DNA lesions. A damage recognition complex composed of 2 UvrA and 2 UvrB subunits scans DNA for abnormalities. Upon binding of the UvrA(2)B(2) complex to a putative damaged site, the DNA wraps around one UvrB monomer. DNA wrap is dependent on ATP binding by UvrB and probably causes local melting of the DNA helix, facilitating insertion of UvrB beta-hairpin between the DNA strands. Then UvrB probes one DNA strand for the presence of a lesion. If a lesion is found the UvrA subunits dissociate and the UvrB-DNA preincision complex is formed. This complex is subsequently bound by UvrC and the second UvrB is released. If no lesion is found, the DNA wraps around the other UvrB subunit that will check the other stand for damage. The sequence is that of UvrABC system protein B from Thermobifida fusca (strain YX).